A 246-amino-acid polypeptide reads, in one-letter code: NAD-dependent protein deacetylase (246 aa).

One can recognise a Deacetylase sirtuin-type domain in the interval 1–246 (MKMKEFLDLL…RRVMEEGGIS (246 aa)). The NAD(+) site is built by Ala-22, Thr-26, Phe-33, Arg-34, Gln-98, Ile-100, Asp-101, and His-116. Phe-33 lines the nicotinamide pocket. Nicotinamide contacts are provided by Ile-100 and Asp-101. His-116 functions as the Proton acceptor in the catalytic mechanism. Zn(2+) contacts are provided by Cys-124, Cys-127, Cys-148, and Cys-151. Residues Ser-189, Ser-190, Asn-214, Leu-215, Gly-216, Asp-231, and Val-232 each contribute to the NAD(+) site.

This sequence belongs to the sirtuin family. Class U subfamily. It depends on Zn(2+) as a cofactor.

The protein localises to the cytoplasm. The enzyme catalyses N(6)-acetyl-L-lysyl-[protein] + NAD(+) + H2O = 2''-O-acetyl-ADP-D-ribose + nicotinamide + L-lysyl-[protein]. Its activity is regulated as follows. Non-competitively inhibited by nicotinamide in vitro and in vivo, but not by nicotinic acid. Nicotinamide inhibits the deacetylation activity by reacting with a reaction intermediate. Functionally, NAD-dependent protein deacetylase which modulates the activities of several enzymes which are inactive in their acetylated form. Also has depropionylation activity in vitro. Also able to ADP-ribosylate peptide substrates with Arg or Lys in the +2 position. The role of this function in vivo is not clear. The polypeptide is NAD-dependent protein deacetylase (Thermotoga maritima (strain ATCC 43589 / DSM 3109 / JCM 10099 / NBRC 100826 / MSB8)).